A 305-amino-acid chain; its full sequence is Ribonuclease BN (305 aa).

7 residues coordinate Zn(2+): His64, His66, Asp68, His69, His141, Asp212, and His270. Residue Asp68 is the Proton acceptor of the active site.

Belongs to the RNase Z family. RNase BN subfamily. In terms of assembly, homodimer. It depends on Zn(2+) as a cofactor.

Its function is as follows. Zinc phosphodiesterase, which has both exoribonuclease and endoribonuclease activities. This Salmonella paratyphi C (strain RKS4594) protein is Ribonuclease BN.